The primary structure comprises 365 residues: tRNA(Met) cytidine acetate ligase (365 aa).

Residues Ile-7–Leu-20, Gly-96, Asn-152, and Arg-175 each bind ATP.

The protein belongs to the TmcAL family.

It is found in the cytoplasm. It catalyses the reaction cytidine(34) in elongator tRNA(Met) + acetate + ATP = N(4)-acetylcytidine(34) in elongator tRNA(Met) + AMP + diphosphate. Its function is as follows. Catalyzes the formation of N(4)-acetylcytidine (ac(4)C) at the wobble position of elongator tRNA(Met), using acetate and ATP as substrates. First activates an acetate ion to form acetyladenylate (Ac-AMP) and then transfers the acetyl group to tRNA to form ac(4)C34. This chain is tRNA(Met) cytidine acetate ligase, found in Streptococcus pneumoniae (strain 70585).